The following is a 151-amino-acid chain: Nucleoside diphosphate kinase (151 aa).

ATP is bound by residues Lys-11, Phe-59, Arg-87, Thr-93, Arg-104, and Asn-114. His-117 serves as the catalytic Pros-phosphohistidine intermediate.

The protein belongs to the NDK family. Homotetramer. Mg(2+) serves as cofactor.

It is found in the cytoplasm. The enzyme catalyses a 2'-deoxyribonucleoside 5'-diphosphate + ATP = a 2'-deoxyribonucleoside 5'-triphosphate + ADP. It carries out the reaction a ribonucleoside 5'-diphosphate + ATP = a ribonucleoside 5'-triphosphate + ADP. Major role in the synthesis of nucleoside triphosphates other than ATP. The ATP gamma phosphate is transferred to the NDP beta phosphate via a ping-pong mechanism, using a phosphorylated active-site intermediate. The chain is Nucleoside diphosphate kinase from Prochlorococcus marinus (strain MIT 9211).